The sequence spans 425 residues: Serine--tRNA ligase (425 aa).

231-233 is an L-serine binding site; the sequence is TAE. 262 to 264 serves as a coordination point for ATP; the sequence is RSE. Residue glutamate 285 participates in L-serine binding. 349–352 contacts ATP; the sequence is EISS. Residue serine 385 coordinates L-serine.

Belongs to the class-II aminoacyl-tRNA synthetase family. Type-1 seryl-tRNA synthetase subfamily. As to quaternary structure, homodimer. The tRNA molecule binds across the dimer.

It localises to the cytoplasm. It carries out the reaction tRNA(Ser) + L-serine + ATP = L-seryl-tRNA(Ser) + AMP + diphosphate + H(+). The enzyme catalyses tRNA(Sec) + L-serine + ATP = L-seryl-tRNA(Sec) + AMP + diphosphate + H(+). Its pathway is aminoacyl-tRNA biosynthesis; selenocysteinyl-tRNA(Sec) biosynthesis; L-seryl-tRNA(Sec) from L-serine and tRNA(Sec): step 1/1. Its function is as follows. Catalyzes the attachment of serine to tRNA(Ser). Is also able to aminoacylate tRNA(Sec) with serine, to form the misacylated tRNA L-seryl-tRNA(Sec), which will be further converted into selenocysteinyl-tRNA(Sec). The sequence is that of Serine--tRNA ligase from Bartonella tribocorum (strain CIP 105476 / IBS 506).